Here is a 55-residue protein sequence, read N- to C-terminus: ATP synthase F(0) complex subunit 8 (55 aa).

A helical membrane pass occupies residues 4-24 (LNPAPWFAILVFSWLVFLTVI). The interval 36 to 55 (EPTSQSTEKTKPEPWNWPWH) is disordered.

This sequence belongs to the ATPase protein 8 family. In terms of assembly, component of the ATP synthase complex composed at least of ATP5F1A/subunit alpha, ATP5F1B/subunit beta, ATP5MC1/subunit c (homooctomer), MT-ATP6/subunit a, MT-ATP8/subunit 8, ATP5ME/subunit e, ATP5MF/subunit f, ATP5MG/subunit g, ATP5MK/subunit k, ATP5MJ/subunit j, ATP5F1C/subunit gamma, ATP5F1D/subunit delta, ATP5F1E/subunit epsilon, ATP5PF/subunit F6, ATP5PB/subunit b, ATP5PD/subunit d, ATP5PO/subunit OSCP. ATP synthase complex consists of a soluble F(1) head domain (subunits alpha(3) and beta(3)) - the catalytic core - and a membrane F(0) domain - the membrane proton channel (subunits c, a, 8, e, f, g, k and j). These two domains are linked by a central stalk (subunits gamma, delta, and epsilon) rotating inside the F1 region and a stationary peripheral stalk (subunits F6, b, d, and OSCP).

The protein resides in the mitochondrion membrane. In terms of biological role, subunit 8, of the mitochondrial membrane ATP synthase complex (F(1)F(0) ATP synthase or Complex V) that produces ATP from ADP in the presence of a proton gradient across the membrane which is generated by electron transport complexes of the respiratory chain. ATP synthase complex consist of a soluble F(1) head domain - the catalytic core - and a membrane F(1) domain - the membrane proton channel. These two domains are linked by a central stalk rotating inside the F(1) region and a stationary peripheral stalk. During catalysis, ATP synthesis in the catalytic domain of F(1) is coupled via a rotary mechanism of the central stalk subunits to proton translocation. In vivo, can only synthesize ATP although its ATP hydrolase activity can be activated artificially in vitro. Part of the complex F(0) domain. This Salvelinus alpinus (Arctic char) protein is ATP synthase F(0) complex subunit 8.